Here is a 568-residue protein sequence, read N- to C-terminus: Multidrug and toxin extrusion protein 1 (568 aa).

Residue Met-1 is modified to N-acetylmethionine. At 1-36 the chain is on the cytoplasmic side; that stretch reads MEAPVELGPGGRQASPERRHWLRCLVLSDFREELRA. A helical membrane pass occupies residues 37–57; it reads LLVLACPAFLAQLMVFLISFV. Residues 58-71 lie on the Extracellular side of the membrane; the sequence is SSVFCGHLSKLELN. A helical membrane pass occupies residues 72–92; that stretch reads AVTLAIAVINVMGVSVGFGLS. The Cytoplasmic segment spans residues 93-119; it reads SACDTLISQTYGSRNLKHVGVILQRGS. A helical transmembrane segment spans residues 120–140; the sequence is LILLLCCLPCWALFLNTQHIL. Residues 141–151 are Extracellular-facing; sequence LLFRQDPAVSR. Residues 152–172 form a helical membrane-spanning segment; the sequence is LTQTYVTIFIPALPATFLYTL. Residues 173-175 lie on the Cytoplasmic side of the membrane; that stretch reads QVK. A helical transmembrane segment spans residues 176 to 196; the sequence is YLLNQGIVLPQVVTGVAANLV. Over 197–214 the chain is Extracellular; sequence NALANYLFVYQLHLGVMG. The helical transmembrane segment at 215 to 235 threads the bilayer; that stretch reads SALANTVAQFTLALLLFLYIL. At 236-255 the chain is on the cytoplasmic side; that stretch reads RSKVYQATWGGWSLECLQDW. A helical membrane pass occupies residues 256-278; it reads ASFFRLAIPSMLMLCMEWWAYEI. Topologically, residues 279–294 are extracellular; sequence GSFLSGILGMVELGAQ. A helical transmembrane segment spans residues 295–315; that stretch reads SVTYELAVIVYMIPMGLSVAV. The Cytoplasmic segment spans residues 316-335; the sequence is NVRVGNALGAGNIEQAKKSS. A helical membrane pass occupies residues 336 to 356; it reads AVALLVTELIAVVFCVMLLSC. The Extracellular segment spans residues 357–369; that stretch reads KDLVGYIFTSDRD. Residues 370–390 traverse the membrane as a helical segment; it reads IIALVAQVTPIYAVSHLFESL. The Cytoplasmic portion of the chain corresponds to 391–407; the sequence is AGTSGGILRGSGNQKFG. A helical transmembrane segment spans residues 408-430; it reads AIVNAIGYYVVGLPIGIALMFAA. The Extracellular segment spans residues 431–433; sequence KLG. Residues 434–456 traverse the membrane as a helical segment; that stretch reads VIGLWLGIVVCAVSQAVCFLGFI. Topologically, residues 457–544 are cytoplasmic; that stretch reads ARLNWTKACQ…LSGKQLALRR (88 aa). A helical transmembrane segment spans residues 545–565; it reads GLLLLGVILVLLAGILVKVYV. The Extracellular segment spans residues 566–568; it reads RTQ.

This sequence belongs to the multi antimicrobial extrusion (MATE) (TC 2.A.66.1) family. In terms of tissue distribution, predominantly expressed in kidney and liver.

Its subcellular location is the cell membrane. It is found in the apical cell membrane. The enzyme catalyses thiamine(out) + H(+)(in) = thiamine(in) + H(+)(out). It catalyses the reaction estrone 3-sulfate(in) + H(+)(out) = estrone 3-sulfate(out) + H(+)(in). It carries out the reaction creatinine(in) + H(+)(out) = creatinine(out) + H(+)(in). The catalysed reaction is agmatine(in) + H(+)(out) = agmatine(out) + H(+)(in). Functionally, multidrug efflux pump that functions as a H(+)/organic cation antiporter. Plays a physiological role in the excretion of cationic compounds including endogenous metabolites, drugs, toxins through the kidney and liver, into urine and bile respectively. Mediates the efflux of endogenous compounds such as creatinine, vitamin B1/thiamine, agmatine and estrone-3-sulfate. May also contribute to regulate the transport of cationic compounds in testis across the blood-testis-barrier. This is Multidrug and toxin extrusion protein 1 (SLC47A1) from Oryctolagus cuniculus (Rabbit).